The chain runs to 424 residues: Protein UL117 (424 aa).

A disordered region spans residues 57 to 82 (IVPTTSSSLAPPRDDERRPTPPLRPP).

This sequence belongs to the herpesviridae U84 family.

It is found in the host nucleus. Functionally, plays a role in the inhibition of host DNA replication in the infected cell. Targets the mini-chromosome maintenance (MCM) complex and blocks the accumulation of MCM proteins and their loading onto host chromatin. The sequence is that of Protein UL117 (UL117) from Human cytomegalovirus (strain AD169) (HHV-5).